Here is a 493-residue protein sequence, read N- to C-terminus: Probable plastidic glucose transporter 2 (493 aa).

A compositionally biased stretch (polar residues) spans 1–14 (MLGLQRETSSMYKR). The disordered stretch occupies residues 1 to 24 (MLGLQRETSSMYKRTSSRDYSPMI). The next 12 helical transmembrane spans lie at 52–72 (LPHV…LGVV), 94–114 (LVVS…GGVA), 128–148 (LPMI…VMLL), 151–171 (FLVG…VTEV), 182–202 (SFIQ…GIPV), 211–231 (VCFW…FLCA), 293–313 (VVFI…NAVF), 329–349 (LGNI…MVLM), 356–376 (LLLL…VGAT), 392–412 (GTLV…GLLL), 424–444 (AMAF…LLFL), and 450–470 (LGPR…VMFV).

It belongs to the major facilitator superfamily. Sugar transporter (TC 2.A.1.1) family.

The protein localises to the plastid. The protein resides in the chloroplast membrane. Its function is as follows. May be involved in the efflux of glucose towards the cytosol. The polypeptide is Probable plastidic glucose transporter 2 (Arabidopsis thaliana (Mouse-ear cress)).